We begin with the raw amino-acid sequence, 329 residues long: Quinate dehydrogenase (329 aa).

It catalyses the reaction L-quinate + NAD(+) = 3-dehydroquinate + NADH + H(+). Its pathway is aromatic compound metabolism; 3,4-dihydroxybenzoate biosynthesis; 3-dehydroquinate from D-quinate (NAD(+) route): step 1/1. The chain is Quinate dehydrogenase (qutB) from Emericella nidulans (strain FGSC A4 / ATCC 38163 / CBS 112.46 / NRRL 194 / M139) (Aspergillus nidulans).